The sequence spans 145 residues: MSNIIIVINGPNLNMLGKREPGIYGGKTLKDIENDCVNAGADLGFSVEFRQSNHEGVLVDWLHEAGERAAGVVINPGAYSHTSIALHDAIRAISTPVVEVHISNIHAREEFRHKSMVSPAAKGMICGFGPYGYVMALHALKNITA.

Tyr-24 (proton acceptor) is an active-site residue. Positions 75, 81, and 88 each coordinate substrate. His-101 serves as the catalytic Proton donor. Substrate contacts are provided by residues 102 to 103 and Arg-112; that span reads IS.

The protein belongs to the type-II 3-dehydroquinase family. Homododecamer.

The catalysed reaction is 3-dehydroquinate = 3-dehydroshikimate + H2O. The protein operates within metabolic intermediate biosynthesis; chorismate biosynthesis; chorismate from D-erythrose 4-phosphate and phosphoenolpyruvate: step 3/7. Functionally, catalyzes a trans-dehydration via an enolate intermediate. This chain is 3-dehydroquinate dehydratase 1 (aroQ1), found in Agrobacterium fabrum (strain C58 / ATCC 33970) (Agrobacterium tumefaciens (strain C58)).